A 154-amino-acid chain; its full sequence is Aspartate carbamoyltransferase regulatory chain (154 aa).

Residues cysteine 109, cysteine 114, cysteine 138, and cysteine 141 each contribute to the Zn(2+) site.

The protein belongs to the PyrI family. Contains catalytic and regulatory chains. Zn(2+) serves as cofactor.

Functionally, involved in allosteric regulation of aspartate carbamoyltransferase. The chain is Aspartate carbamoyltransferase regulatory chain from Photobacterium profundum (strain SS9).